The chain runs to 445 residues: MVESIAAGQVGDNKHIEMWKIKRLINKLENCKGNGTSMVSLIIPPKEDINKSGKLLVGELSAAQNIKSRITRQSVITAITSTKEKLKLYRQTPTNGLCIYCGVILMEDGKTEKKINFDFEPFRPINQFMYFCGGKFQTEPLTTLLADDDKFGFIIVDGNGALYATLQGNSREILQKITVELPKKHRKGGQSSVRFARLREEKRHNYLRKVAELAGSNFITNDKPNVTGLVLAGNAGFKNELSETDMLDKRLLPIIVSIVDVSYGGENGLNEAITLSADALTNVKFVAEKKLVSKFFEEISLDTGMIVFGVQDTMKALELGAVETILLFEELEITRYVIKNPVKGDTRTLFLNPTQQKDSKYFKDQASGLDMDVISEDQLAEWLCHNYQNYXAQVEFITDKSQEGYQFVKGFGGIGGFLRYKVDMEEALGDVGDGGDDFDPDTDFI.

The protein belongs to the eukaryotic release factor 1 family. As to quaternary structure, heterodimer of two subunits, one of which binds GTP.

The protein resides in the cytoplasm. In terms of biological role, directs the termination of nascent peptide synthesis (translation) in response to the termination codon UGA. In Stylonchia UAA and UAG codes for glutamine. The chain is Eukaryotic peptide chain release factor subunit 1 (ERF1) from Stylonychia mytilus (Ciliate).